The primary structure comprises 356 residues: UDP-N-acetylglucosamine--N-acetylmuramyl-(pentapeptide) pyrophosphoryl-undecaprenol N-acetylglucosamine transferase (356 aa).

Residues 15 to 17 (TGG), Asn127, Arg163, Ser191, Ile244, 263 to 268 (ALTVSE), and Gln288 each bind UDP-N-acetyl-alpha-D-glucosamine.

The protein belongs to the glycosyltransferase 28 family. MurG subfamily.

The protein localises to the cell inner membrane. The catalysed reaction is di-trans,octa-cis-undecaprenyl diphospho-N-acetyl-alpha-D-muramoyl-L-alanyl-D-glutamyl-meso-2,6-diaminopimeloyl-D-alanyl-D-alanine + UDP-N-acetyl-alpha-D-glucosamine = di-trans,octa-cis-undecaprenyl diphospho-[N-acetyl-alpha-D-glucosaminyl-(1-&gt;4)]-N-acetyl-alpha-D-muramoyl-L-alanyl-D-glutamyl-meso-2,6-diaminopimeloyl-D-alanyl-D-alanine + UDP + H(+). Its pathway is cell wall biogenesis; peptidoglycan biosynthesis. In terms of biological role, cell wall formation. Catalyzes the transfer of a GlcNAc subunit on undecaprenyl-pyrophosphoryl-MurNAc-pentapeptide (lipid intermediate I) to form undecaprenyl-pyrophosphoryl-MurNAc-(pentapeptide)GlcNAc (lipid intermediate II). The polypeptide is UDP-N-acetylglucosamine--N-acetylmuramyl-(pentapeptide) pyrophosphoryl-undecaprenol N-acetylglucosamine transferase (Yersinia pestis bv. Antiqua (strain Antiqua)).